The following is a 375-amino-acid chain: Trichodiene synthase (375 aa).

It belongs to the trichodiene synthase family.

The enzyme catalyses (2E,6E)-farnesyl diphosphate = trichodiene + diphosphate. The protein operates within sesquiterpene biosynthesis; trichothecene biosynthesis. TS is a member of the terpene cyclase group of enzymes. It catalyzes the isomerization and cyclization of farnesyl pyro-phosphate to form trichodiene, the first cyclic intermediate in the biosynthetic pathway for trichothecenes. It serves to branch trichothecene biosynthesis from the isoprenoid pathway. In Fusarium mesoamericanum, this protein is Trichodiene synthase (TRI5).